A 721-amino-acid polypeptide reads, in one-letter code: MSSLESSSESIAVNILGQTNRRVARAQAQAFIDTLKPLQHPNSQKLYLQGSRADLRVGMRQILQTDTRIGGRAAAPNVEKNPPIPVYDCAGPYSDPAAQINVRQGLAKLRLPWIIERQDTEVLDCTTSDFTQQRLKDDGLDHLRFEAGSSAIIRPRRALPGKRVSQLHYARQGIITPEMEYVAIRENMALADVQDEILNRRGQGESFGAVIGKPITPEFVRDEIARGRAIIPLNINHPEAEPMTIGRNFLVKVNANIGNSAVTSSIEEEVEKLVWSTRWGADTVMDLSTGRYIHETREWIIRNSPVPIGTVPIYQALEKVNGVAEHLTWEVFRDTLIEQAEQGVDYFTIHAGVLLRYVPMTAKRVTGIVSRGGSIMAKWCLSHHQENFLYTHFREICELCVAYDVSLSLGDGMRPGSIADANDEAQFAELETLGELVNIAWEYDVQTIIEGPGHIPMQLIKENMDKQLIHCAEAPFYTLGPQITDIAPGYDHFTSGIGAAMIAWYGCAMLCYVTPKEHLGLPNKQDVKQGLIAYKIAAHAADIAKGHPGAQIRDNALSKARFEFRWEDQYNLGLDPDTARAYHDESLPQESAKVAHFCSMCGPKFCSMKITQDVRDYAASLEADAKAQSLAAETDGALAPLGSVQQVKSGHSELSHIDAELNYIAVKTQDELTAAMAQKSAEFAALGAKLYLPLDNANAANELAKHKDGAKLQSKTQVAKV.

Substrate contacts are provided by residues Asn256, Met285, Tyr314, His350, Ser370–Gly372, Asp411–Arg414, and Glu450. His454 provides a ligand contact to Zn(2+). Tyr477 lines the substrate pocket. His518 is a Zn(2+) binding site. [4Fe-4S] cluster contacts are provided by Cys598, Cys601, and Cys606.

The protein belongs to the ThiC family. In terms of assembly, homodimer. Requires [4Fe-4S] cluster as cofactor.

The enzyme catalyses 5-amino-1-(5-phospho-beta-D-ribosyl)imidazole + S-adenosyl-L-methionine = 4-amino-2-methyl-5-(phosphooxymethyl)pyrimidine + CO + 5'-deoxyadenosine + formate + L-methionine + 3 H(+). Its pathway is cofactor biosynthesis; thiamine diphosphate biosynthesis. Catalyzes the synthesis of the hydroxymethylpyrimidine phosphate (HMP-P) moiety of thiamine from aminoimidazole ribotide (AIR) in a radical S-adenosyl-L-methionine (SAM)-dependent reaction. In Shewanella oneidensis (strain ATCC 700550 / JCM 31522 / CIP 106686 / LMG 19005 / NCIMB 14063 / MR-1), this protein is Phosphomethylpyrimidine synthase.